Here is a 528-residue protein sequence, read N- to C-terminus: MNDDPNALARIWIDVVADLTSDSPGGDLPPLTRGQKAWLALVKPLTLAQGFALLSVPSPFAQEAIERDLREPILHALGRHLGEQVEGLGVRIAAPVDDEPESEAPSRERRPDPEPVHTPRHLEPSVTSSGTFRRRRFGSGDDQPYSDTTDFEEVDDDSEALASVHESWPSYFTKPPAGPAPAATGGNSLNAKYTFDTFVIGSSNRFAHAAAVAIAEAPARAYNPLFIWGASGLGKTHLLHAAGHYAQRLFPGMRVKYVSTEEFTNDFINSLRDDRKVAFKRRYRETDVLLVDDIQFIEGKEGIQEEFFHTFNTLHNANKQIVVSSDRPPKQLATLEERLRTRFEWGLITDVQPPELETRIAILSKKARMDRLEVPDDVLELIASRIERNIRELEGALIRVTAFASLNRQPLDLTLAEVVLRDLMPDSSSLEINAATIMAVTAEYFNMSIDDLCGPGKARPLASARQISMYLCRELTDLSLPKIGQTFGRDHTTVMYADKKIRKEMTERRKVYDQVQELTARIKQRSKR.

The interval 1 to 104 is domain I, interacts with DnaA modulators; the sequence is MNDDPNALAR…PVDDEPESEA (104 aa). Positions 93-159 are disordered; sequence AAPVDDEPES…DFEEVDDDSE (67 aa). Over residues 104 to 123 the composition is skewed to basic and acidic residues; that stretch reads APSRERRPDPEPVHTPRHLE. The domain II stretch occupies residues 105-187; sequence PSRERRPDPE…GPAPAATGGN (83 aa). Acidic residues predominate over residues 149–159; it reads TDFEEVDDDSE. Residues 188 to 404 form a domain III, AAA+ region region; the sequence is SLNAKYTFDT…GALIRVTAFA (217 aa). ATP contacts are provided by Gly-232, Gly-234, Lys-235, and Thr-236. The interval 405 to 528 is domain IV, binds dsDNA; the sequence is SLNRQPLDLT…TARIKQRSKR (124 aa).

Belongs to the DnaA family. Oligomerizes as a right-handed, spiral filament on DNA at oriC.

The protein localises to the cytoplasm. Plays an essential role in the initiation and regulation of chromosomal replication. ATP-DnaA binds to the origin of replication (oriC) to initiate formation of the DNA replication initiation complex once per cell cycle. Binds the DnaA box (a 9 base pair repeat at the origin) and separates the double-stranded (ds)DNA. Forms a right-handed helical filament on oriC DNA; dsDNA binds to the exterior of the filament while single-stranded (ss)DNA is stabiized in the filament's interior. The ATP-DnaA-oriC complex binds and stabilizes one strand of the AT-rich DNA unwinding element (DUE), permitting loading of DNA polymerase. After initiation quickly degrades to an ADP-DnaA complex that is not apt for DNA replication. Binds acidic phospholipids. The protein is Chromosomal replication initiator protein DnaA of Rhodococcus opacus (strain B4).